Here is a 558-residue protein sequence, read N- to C-terminus: Serine palmitoyltransferase 1 (558 aa).

Over 1–49 the chain is Lumenal; it reads MAHIPEVLPKSIPIPAFIVTTSSYLWYYFNLVLTQIPGGQFIVSYIKKS. A helical transmembrane segment spans residues 50–84; the sequence is HHDDPYRTTVEIGLILYGIIYYLSKPQQKKSLQAQ. Over 85-341 the chain is Cytoplasmic; it reads KPNLSPQEID…GRGLSEHFNM (257 aa). Threonine 121 bears the Phosphothreonine mark. A helical transmembrane segment spans residues 342–371; it reads DRATAIDITVGSMATALGSTGGFVLGDSVM. Topologically, residues 372–424 are lumenal; that stretch reads CLHQRIGSNAYCFSACLPAYTVTSVSKVLKLMDSNNDAVQTLQKLSKSLHDSF. Residues 425-457 form a helical membrane-spanning segment; that stretch reads ASDDSLRSYVIVTSSPVSAVLHLQLTPAYRSRK. The Cytoplasmic segment spans residues 458 to 558; the sequence is FGYTCEQLFE…ILACCQESNK (101 aa).

Belongs to the class-II pyridoxal-phosphate-dependent aminotransferase family. In terms of assembly, LCB1 and LCB2 encode essential subunits of the enzyme and form a heterodimer. Component of the SPOTS complex, at least composed of LCB1/2 (LCB1 and/or LCB2), ORM1/2 (ORM1 and/or ORM2), SAC1 and TSC3. Interacts with LCB2 and TSC3. The cofactor is pyridoxal 5'-phosphate.

It localises to the cytoplasm. The protein localises to the endoplasmic reticulum membrane. The enzyme catalyses L-serine + hexadecanoyl-CoA + H(+) = 3-oxosphinganine + CO2 + CoA. The protein operates within lipid metabolism; sphingolipid metabolism. In terms of biological role, component of serine palmitoyltransferase (SPT), which catalyzes the committed step in the synthesis of sphingolipids, the condensation of serine with palmitoyl CoA to form the long chain base 3-ketosphinganine. The sequence is that of Serine palmitoyltransferase 1 (LCB1) from Saccharomyces cerevisiae (strain ATCC 204508 / S288c) (Baker's yeast).